We begin with the raw amino-acid sequence, 322 residues long: Nucleoprotein (322 aa).

RNA-binding residues include tyrosine 43, tyrosine 46, valine 76, arginine 122, lysine 240, and serine 269.

This sequence belongs to the tenuiviruses nucleocapsid protein family.

The protein localises to the virion. Its subcellular location is the host cytoplasm. Encapsidates the genome, protecting it from nucleases. The encapsidated genomic RNA is termed the nucleocapsid (NC), and serves as template for viral transcription and replication. This is Nucleoprotein from Avena sativa (Oat).